The primary structure comprises 154 residues: Myoglobin (154 aa).

The region spanning Gly2–Lys148 is the Globin domain. Position 4 is a phosphoserine (Ser4). His65 is a binding site for nitrite. His65 contacts O2. Phosphothreonine is present on Thr68. His94 contacts heme b.

Monomer.

The protein localises to the cytoplasm. It localises to the sarcoplasm. It carries out the reaction Fe(III)-heme b-[protein] + nitric oxide + H2O = Fe(II)-heme b-[protein] + nitrite + 2 H(+). It catalyses the reaction H2O2 + AH2 = A + 2 H2O. Its function is as follows. Monomeric heme protein which primary function is to store oxygen and facilitate its diffusion within muscle tissues. Reversibly binds oxygen through a pentacoordinated heme iron and enables its timely and efficient release as needed during periods of heightened demand. Depending on the oxidative conditions of tissues and cells, and in addition to its ability to bind oxygen, it also has a nitrite reductase activity whereby it regulates the production of bioactive nitric oxide. Under stress conditions, like hypoxia and anoxia, it also protects cells against reactive oxygen species thanks to its pseudoperoxidase activity. The polypeptide is Myoglobin (Rangifer tarandus (Reindeer)).